A 292-amino-acid polypeptide reads, in one-letter code: Nanos homolog 1 (292 aa).

Disordered stretches follow at residues 1–41 (MEAF…QPFS) and 68–121 (GGNG…SRGR). The essential for its translational repressor activity stretch occupies residues 40–56 (FSSWNDYLGLATLITKA). Positions 76–87 (PPSSSSSSCCSP) are enriched in low complexity. A compositionally biased stretch (acidic residues) spans 104-115 (DYDEDDDDDSDE). A Nanos-type zinc finger spans residues 213–267 (VCVFCRNNKEAMALYTTHILKGPDGRVLCPVLRRYTCPLCGASGDNAHTIKYCPL). Zn(2+) is bound by residues Cys214, Cys217, His230, Cys241, Cys249, Cys252, His260, and Cys265. 2 consecutive short sequence motifs (C2HC) follow at residues 214 to 241 (CVFCRNNKEAMALYTTHILKGPDGRVLC) and 249 to 265 (CPLCGASGDNAHTIKYC). The interval 268–292 (SKVPPPPARPPPRSARDGPPGKKLR) is disordered. The segment covering 269-280 (KVPPPPARPPPR) has biased composition (pro residues). The segment covering 281–292 (SARDGPPGKKLR) has biased composition (basic and acidic residues).

This sequence belongs to the nanos family. In terms of assembly, interacts with PUM2, SNAPIN and CTNNB1. Interacts (via N-terminal region) with CTNND1. Interacts with DDX20 (via N-terminal region). As to expression, testis and ovary (at protein level). Predominantly expressed in testis. Specifically expressed during germline development. In adult tissues, it is mainly expressed in spermatogonia, the stem cells of the germline. Also expressed during meiosis in spermatocytes. Not present in late, post-meiotic stage germ cells. Expressed in fetal ovaries, while it is weakly or not expressed in mature postmeiotic oocytes, suggesting that it may be expressed in premeiotic female germ cells. Expressed at high levels only in the E-cadherin deficient cell lines. Highly expressed in lung carcinomas and mostly detected in invasive tumor cells and its expression correlates with tumor aggressiveness.

It is found in the cytoplasm. The protein resides in the perinuclear region. Its function is as follows. May act as a translational repressor which regulates translation of specific mRNAs by forming a complex with PUM2 that associates with the 3'-UTR of mRNA targets. Capable of interfering with the proadhesive and anti-invasive functions of E-cadherin. Up-regulates the production of MMP14 to promote tumor cell invasion. This is Nanos homolog 1 (NANOS1) from Homo sapiens (Human).